The chain runs to 201 residues: MBF complex negative regulatory component yox1 (201 aa).

Polar residues predominate over residues 1 to 22; that stretch reads MSLSDSPSKSGNTGKDLISNNE. The tract at residues 1 to 42 is disordered; the sequence is MSLSDSPSKSGNTGKDLISNNEAKNHEDEETHQKKRRRRTTD. A compositionally biased stretch (basic and acidic residues) spans 23-32; sequence AKNHEDEETH. Residues 33-92 constitute a DNA-binding region (homeobox); that stretch reads QKKRRRRTTDAEATLLEQYFLKTPKPSLIERQELSKKLKSSMTPRELQIWFQNKRQSLRR.

Component of the MBF transcription factor complex. In terms of processing, phosphorylated in response to hydroxyurea. Phosphorylation inhibits the repressor activity and is dependent on rad3. However, the regulation of yox1 by rad3 is probably indirect.

The protein localises to the nucleus. Negative regulatory component of the MBF transcription factor complex involved in cell-cycle G1/S phase-specific gene expression and more particularly DNA replication checkpoint-dependent gene expression. The chain is MBF complex negative regulatory component yox1 (yox1) from Schizosaccharomyces pombe (strain 972 / ATCC 24843) (Fission yeast).